Consider the following 620-residue polypeptide: DNA mismatch repair protein MutL (620 aa).

The disordered stretch occupies residues 353–375 (SRANGANDFTGRPFSGTERPRGG).

Belongs to the DNA mismatch repair MutL/HexB family.

This protein is involved in the repair of mismatches in DNA. It is required for dam-dependent methyl-directed DNA mismatch repair. May act as a 'molecular matchmaker', a protein that promotes the formation of a stable complex between two or more DNA-binding proteins in an ATP-dependent manner without itself being part of a final effector complex. The protein is DNA mismatch repair protein MutL of Chelativorans sp. (strain BNC1).